We begin with the raw amino-acid sequence, 85 residues long: UPF0335 protein WP0746 (85 aa).

It belongs to the UPF0335 family.

The protein is UPF0335 protein WP0746 of Wolbachia pipientis subsp. Culex pipiens (strain wPip).